The following is an 850-amino-acid chain: DEAD-box ATP-dependent RNA helicase 26 (850 aa).

2 disordered regions span residues 60–82 and 106–350; these read TRPERSQPEFARRSGAGGEIRAS and GKFT…ENDE. The segment covering 61 to 71 has biased composition (basic and acidic residues); sequence RPERSQPEFAR. A Phosphothreonine modification is found at T109. At S110 the chain carries Phosphoserine. Composition is skewed to basic and acidic residues over residues 118-140 and 284-299; these read EVVRRNVDRDTSRGPRRGREGQS and GRNDRNVESGFRREPG. Composition is skewed to acidic residues over residues 315 to 325 and 336 to 350; these read LEEEDSSDDDE and LPSEDSSDEDDENDE. Positions 382–410 match the Q motif motif; the sequence is TRFDQFPLSPLSLKAIKDAGFETMTVVQE. A Helicase ATP-binding domain is found at 413–596; it reads LPIILQGKDV…HVALKRDHEF (184 aa). 426 to 433 provides a ligand contact to ATP; the sequence is AKTGTGKT. The DEAD box motif lies at 544 to 547; that stretch reads DEAD. One can recognise a Helicase C-terminal domain in the interval 630-777; sequence LLKEHIADNV…IDPEAVKRVQ (148 aa).

Belongs to the DEAD box helicase family.

It catalyses the reaction ATP + H2O = ADP + phosphate + H(+). The polypeptide is DEAD-box ATP-dependent RNA helicase 26 (RH26) (Arabidopsis thaliana (Mouse-ear cress)).